The primary structure comprises 469 residues: 3-isopropylmalate dehydratase large subunit (469 aa).

[4Fe-4S] cluster is bound by residues Cys349, Cys410, and Cys413.

It belongs to the aconitase/IPM isomerase family. LeuC type 1 subfamily. In terms of assembly, heterodimer of LeuC and LeuD. The cofactor is [4Fe-4S] cluster.

It carries out the reaction (2R,3S)-3-isopropylmalate = (2S)-2-isopropylmalate. It functions in the pathway amino-acid biosynthesis; L-leucine biosynthesis; L-leucine from 3-methyl-2-oxobutanoate: step 2/4. In terms of biological role, catalyzes the isomerization between 2-isopropylmalate and 3-isopropylmalate, via the formation of 2-isopropylmaleate. This Neisseria gonorrhoeae (strain ATCC 700825 / FA 1090) protein is 3-isopropylmalate dehydratase large subunit.